Here is a 348-residue protein sequence, read N- to C-terminus: 4-hydroxy-3-methylbut-2-en-1-yl diphosphate synthase (flavodoxin) (348 aa).

C263, C266, C298, and E305 together coordinate [4Fe-4S] cluster.

This sequence belongs to the IspG family. [4Fe-4S] cluster is required as a cofactor.

It catalyses the reaction (2E)-4-hydroxy-3-methylbut-2-enyl diphosphate + oxidized [flavodoxin] + H2O + 2 H(+) = 2-C-methyl-D-erythritol 2,4-cyclic diphosphate + reduced [flavodoxin]. Its pathway is isoprenoid biosynthesis; isopentenyl diphosphate biosynthesis via DXP pathway; isopentenyl diphosphate from 1-deoxy-D-xylulose 5-phosphate: step 5/6. Its function is as follows. Converts 2C-methyl-D-erythritol 2,4-cyclodiphosphate (ME-2,4cPP) into 1-hydroxy-2-methyl-2-(E)-butenyl 4-diphosphate. The protein is 4-hydroxy-3-methylbut-2-en-1-yl diphosphate synthase (flavodoxin) of Dehalococcoides mccartyi (strain CBDB1).